Here is a 278-residue protein sequence, read N- to C-terminus: MDVRQSIHGAHAKTLDTQGLRNEFLVEKVFVADEYTMVYSHIDRIIVGGIMPITKTVSVGGEVGKQLGVSYFLERRELGVINIGGAGTITVDGQCYEIGHRDALYVGKGAKEVVFASIDTATPAKFYYNCAPAHTTYPTKKVTPDEVSPVTLGDNLTSNRRTINKYFVPDVLETCQLSMGLTELAPGNLWNTMPCHTHERRMEVYFYFNMDDDACVFHMMGQPQETRHIVMHNEQAVISPSWSIHSGVGTKAYTFIWGMVGENQVFNDMDHVAVKDLR.

Zn(2+)-binding residues include His-196, His-198, Glu-203, and His-245.

This sequence belongs to the KduI family. It depends on Zn(2+) as a cofactor.

It catalyses the reaction 5-dehydro-4-deoxy-D-glucuronate = 3-deoxy-D-glycero-2,5-hexodiulosonate. It functions in the pathway glycan metabolism; pectin degradation; 2-dehydro-3-deoxy-D-gluconate from pectin: step 4/5. Catalyzes the isomerization of 5-dehydro-4-deoxy-D-glucuronate to 3-deoxy-D-glycero-2,5-hexodiulosonate. This chain is 4-deoxy-L-threo-5-hexosulose-uronate ketol-isomerase, found in Shigella flexneri serotype 5b (strain 8401).